A 140-amino-acid polypeptide reads, in one-letter code: 5-NmdU N-acetyltransferase (140 aa).

An N-acetyltransferase domain is found at 2–140 (IVVRKALPEE…GEGLALFKEW (139 aa)).

The protein belongs to the acetyltransferase family.

It carries out the reaction 5-aminomethyl-dUMP in DNA + acetyl-CoA = 5-acetylaminomethyl-dUMP in DNA + CoA + H(+). In terms of biological role, acetylates 5-aminomethyl-2'-deoxyuridine (5-NmdU) to produce 5-acetylaminomethyl-2'-deoxyuridine (5-AcNmdU) on DNA as a step in the pathway leading to thymidine hypermodifications in the viral genome. As a final result of the pathway of hypermodification, 5-acetylaminomethyl-2'-deoxyuridine (5-AcNmdU) substitutes for a subset of thymidines in the viral DNA. These modifications probably prevent degradation of viral genome by the host restriction-modification antiviral defense system. This is 5-NmdU N-acetyltransferase from Pseudomonas aeruginosa.